The following is a 310-amino-acid chain: Methionyl-tRNA formyltransferase (310 aa).

A (6S)-5,6,7,8-tetrahydrofolate-binding site is contributed by 109 to 112 (SLLP).

It belongs to the Fmt family.

It carries out the reaction L-methionyl-tRNA(fMet) + (6R)-10-formyltetrahydrofolate = N-formyl-L-methionyl-tRNA(fMet) + (6S)-5,6,7,8-tetrahydrofolate + H(+). Attaches a formyl group to the free amino group of methionyl-tRNA(fMet). The formyl group appears to play a dual role in the initiator identity of N-formylmethionyl-tRNA by promoting its recognition by IF2 and preventing the misappropriation of this tRNA by the elongation apparatus. The sequence is that of Methionyl-tRNA formyltransferase from Agathobacter rectalis (strain ATCC 33656 / DSM 3377 / JCM 17463 / KCTC 5835 / VPI 0990) (Eubacterium rectale).